We begin with the raw amino-acid sequence, 167 residues long: DNA-directed RNA polymerase II subunit rpb-9 (167 aa).

Residues 28–49 (DDMYDQNGASPAPSQNEKPGKS) form a disordered region. Residues 34–44 (NGASPAPSQNE) show a composition bias toward polar residues. Zn(2+)-binding residues include Cys59, Cys62, Cys81, Cys84, Cys128, Cys131, Cys156, and Cys161. Residues 59 to 84 (CPECNNMLYPREDKESRVLMYSCRNC) form a C4-type zinc finger. The TFIIS-type zinc-finger motif lies at 124–166 (EEHQCPVCGKSKAVFFQAQTKKAEEEMRLYYVCASQDCQHRWT).

Belongs to the archaeal RpoM/eukaryotic RPA12/RPB9/RPC11 RNA polymerase family. As to quaternary structure, component of the RNA polymerase II (Pol II) complex consisting of 12 subunits. As to expression, expressed in the soma and in the germline.

Its subcellular location is the nucleus. It is found in the nucleolus. Its function is as follows. DNA-dependent RNA polymerase catalyzes the transcription of DNA into RNA using the four ribonucleoside triphosphates as substrates. Component of RNA polymerase II which synthesizes mRNA precursors and many functional non-coding RNAs. Pol II is the central component of the basal RNA polymerase II transcription machinery. It is composed of mobile elements that move relative to each other. RPB9 is part of the upper jaw surrounding the central large cleft and thought to grab the incoming DNA template. Recruits ints-6, a component of the Integrator complex to PIWI-interacting RNA (piRNA) genes, to mediate Integrator complex-dependent cleavage of 3' ends of nascent transcripts upon RNA Pol II backtracking to terminate transcription and generate piRNA precursors. Promotes the biogenesis of secondary 22G-siRNAs (a class of 22 nucleotide siRNAs that possess a triphosphorylated guanine residue at the 5'-end). Involved in gene silencing mediated by a class of 21 nucleotide piRNAs that possess a uracil residue at the 5'-end (also called 21U-RNAs) and guide the Piwi protein prg-1 to its DNA targets for silencing. Plays a role in small RNA-directed transgenerational epigenetic inheritance (also called RNAe) over several generations. Not required for the transgenerational inheritance of exogenous small interfering RNAs (RNAi). May play a role in the silencing of the DNA transposable elements from the DNA transposon families, Chapaev-2 and CEMUDR1. This Caenorhabditis elegans protein is DNA-directed RNA polymerase II subunit rpb-9.